We begin with the raw amino-acid sequence, 728 residues long: Glutamate--cysteine ligase (728 aa).

Residues 517 to 552 (PVRTTRRGGSASRSASGTSTPNSGSSRPATPPLGPV) form a disordered region. The segment covering 523 to 536 (RGGSASRSASGTST) has biased composition (low complexity).

The protein belongs to the glutamate--cysteine ligase type 3 family.

It catalyses the reaction L-cysteine + L-glutamate + ATP = gamma-L-glutamyl-L-cysteine + ADP + phosphate + H(+). Its pathway is sulfur metabolism; glutathione biosynthesis; glutathione from L-cysteine and L-glutamate: step 1/2. The sequence is that of Glutamate--cysteine ligase (gcs-1) from Neurospora crassa (strain ATCC 24698 / 74-OR23-1A / CBS 708.71 / DSM 1257 / FGSC 987).